We begin with the raw amino-acid sequence, 280 residues long: Killer cell lectin-like receptor 7 (280 aa).

At 1-44 (MSEQEVTYSTVRFHESSRLQKLVRTEEPQRPREACYREYSVPWK) the chain is on the cytoplasmic side. Residues 45–66 (LIVIACGILCFLLLVTVALLAI) traverse the membrane as a helical; Signal-anchor for type II membrane protein segment. Residues 67–280 (TIFQHSQQKH…CGKRLDKFPH (214 aa)) lie on the Extracellular side of the membrane. Asparagine 104 is a glycosylation site (N-linked (GlcNAc...) asparagine). The C-type lectin domain occupies 156 to 275 (GFEKYWFCYG…SYICICGKRL (120 aa)). Disulfide bonds link cysteine 163–cysteine 168, cysteine 181–cysteine 269, cysteine 185–cysteine 271, and cysteine 250–cysteine 263. Residue asparagine 239 is glycosylated (N-linked (GlcNAc...) asparagine).

In terms of assembly, homodimer; disulfide-linked.

Its subcellular location is the membrane. Receptor on natural killer (NK) cells for class I MHC. The protein is Killer cell lectin-like receptor 7 (Klra7) of Mus musculus (Mouse).